The sequence spans 54 residues: MTNGKIWLVVKPTVGVPLFLSAAVIASVVIHAAVLTTTTWLPAYYQGSAAVAAE.

The Cytoplasmic segment spans residues 1 to 14 (MTNGKIWLVVKPTV). A helical transmembrane segment spans residues 15-35 (GVPLFLSAAVIASVVIHAAVL). Histidine 31 provides a ligand contact to a bacteriochlorophyll. Over 36 to 54 (TTTTWLPAYYQGSAAVAAE) the chain is Periplasmic.

Belongs to the antenna complex alpha subunit family. In terms of assembly, the core complex is formed by different alpha and beta chains, binding bacteriochlorophyll molecules, and arranged most probably in tetrameric structures disposed around the reaction center. The non-pigmented gamma chains may constitute additional components.

The protein localises to the cell inner membrane. Antenna complexes are light-harvesting systems, which transfer the excitation energy to the reaction centers. In Cereibacter sphaeroides (Rhodobacter sphaeroides), this protein is Light-harvesting protein B-800/850 alpha chain (pucA).